Here is an 860-residue protein sequence, read N- to C-terminus: Beta-glucosidase A (860 aa).

The signal sequence occupies residues 1 to 19 (MRFTLIEAVALTAVSLASA). Residues Asn61, Asn211, and Asn252 are each glycosylated (N-linked (GlcNAc...) asparagine). Residue Asp280 is part of the active site. N-linked (GlcNAc...) asparagine glycosylation is found at Asn315, Asn322, Asn354, Asn387, Asn442, Asn523, Asn542, Asn564, Asn658, Asn690, and Asn712. Positions 719–753 (SSGDASYGQDSSDYLPEGATDGSAQPILPAGGGPG) are disordered.

It belongs to the glycosyl hydrolase 3 family.

It localises to the secreted. The catalysed reaction is Hydrolysis of terminal, non-reducing beta-D-glucosyl residues with release of beta-D-glucose.. It functions in the pathway glycan metabolism; cellulose degradation. Beta-glucosidases are one of a number of cellulolytic enzymes involved in the degradation of cellulosic biomass. Catalyzes the last step releasing glucose from the inhibitory cellobiose. The chain is Beta-glucosidase A (bglA) from Aspergillus kawachii (strain NBRC 4308) (White koji mold).